Consider the following 814-residue polypeptide: DNA topoisomerase 1 (814 aa).

Residues 1–12 (MSSSDSDSVSLS) show a composition bias toward low complexity. The interval 1–180 (MSSSDSDSVS…PNDEEDEDED (180 aa)) is disordered. Basic residues predominate over residues 13-22 (IRRRQRRGSS). A phosphoserine mark is found at S52, S54, and S136. Residue T138 is modified to Phosphothreonine. 3 interaction with DNA regions span residues 404 to 405 (KY), 467 to 472 (RAGNEK), and 559 to 561 (SAK). Residues 411–814 (GSSLKGQSDL…AADTPPDWKW (404 aa)) enclose the Topo IB-type catalytic domain. The active-site O-(3'-phospho-DNA)-tyrosine intermediate is the Y773.

This sequence belongs to the type IB topoisomerase family. In terms of assembly, monomer.

It catalyses the reaction ATP-independent breakage of single-stranded DNA, followed by passage and rejoining.. Functionally, releases the supercoiling and torsional tension of DNA introduced during the DNA replication and transcription by transiently cleaving and rejoining one strand of the DNA duplex. Introduces a single-strand break via transesterification at a target site in duplex DNA. The scissile phosphodiester is attacked by the catalytic tyrosine of the enzyme, resulting in the formation of a DNA-(3'-phosphotyrosyl)-enzyme intermediate and the expulsion of a 5'-OH DNA strand. TThe free DNA strand then rotates around the intact phosphodiester bond on the opposing strand, thus removing DNA supercoils. Finally, in the religation step, the DNA 5'-OH attacks the covalent intermediate to expel the active-site tyrosine and restore the DNA phosphodiester backbone. In Schizosaccharomyces pombe (strain 972 / ATCC 24843) (Fission yeast), this protein is DNA topoisomerase 1 (top1).